An 833-amino-acid chain; its full sequence is DNA gyrase subunit A (833 aa).

One can recognise a Topo IIA-type catalytic domain in the interval Leu35–Leu498. The active-site O-(5'-phospho-DNA)-tyrosine intermediate is the Tyr123. The GyrA-box signature appears at Gln525–Gly531. The disordered stretch occupies residues Arg803–Glu833. Positions Ile806 to Arg821 are enriched in acidic residues.

It belongs to the type II topoisomerase GyrA/ParC subunit family. In terms of assembly, heterotetramer, composed of two GyrA and two GyrB chains. In the heterotetramer, GyrA contains the active site tyrosine that forms a transient covalent intermediate with DNA, while GyrB binds cofactors and catalyzes ATP hydrolysis.

Its subcellular location is the cytoplasm. The catalysed reaction is ATP-dependent breakage, passage and rejoining of double-stranded DNA.. In terms of biological role, a type II topoisomerase that negatively supercoils closed circular double-stranded (ds) DNA in an ATP-dependent manner to modulate DNA topology and maintain chromosomes in an underwound state. Negative supercoiling favors strand separation, and DNA replication, transcription, recombination and repair, all of which involve strand separation. Also able to catalyze the interconversion of other topological isomers of dsDNA rings, including catenanes and knotted rings. Type II topoisomerases break and join 2 DNA strands simultaneously in an ATP-dependent manner. The protein is DNA gyrase subunit A of Halalkalibacterium halodurans (strain ATCC BAA-125 / DSM 18197 / FERM 7344 / JCM 9153 / C-125) (Bacillus halodurans).